The following is a 335-amino-acid chain: Methylthioribose-1-phosphate isomerase (335 aa).

Substrate is bound by residues 47–49 (RGA), Arg81, and Gln184. Asp225 serves as the catalytic Proton donor. 235-236 (NK) is a substrate binding site.

It belongs to the eIF-2B alpha/beta/delta subunits family. MtnA subfamily.

It catalyses the reaction 5-(methylsulfanyl)-alpha-D-ribose 1-phosphate = 5-(methylsulfanyl)-D-ribulose 1-phosphate. It participates in amino-acid biosynthesis; L-methionine biosynthesis via salvage pathway; L-methionine from S-methyl-5-thio-alpha-D-ribose 1-phosphate: step 1/6. In terms of biological role, catalyzes the interconversion of methylthioribose-1-phosphate (MTR-1-P) into methylthioribulose-1-phosphate (MTRu-1-P). The polypeptide is Methylthioribose-1-phosphate isomerase (Synechococcus sp. (strain CC9902)).